We begin with the raw amino-acid sequence, 123 residues long: UPF0738 protein BCE_1319 (123 aa).

It belongs to the UPF0738 family.

This is UPF0738 protein BCE_1319 from Bacillus cereus (strain ATCC 10987 / NRS 248).